Consider the following 424-residue polypeptide: Testican-2 (424 aa).

The N-terminal stretch at 1–22 is a signal peptide; that stretch reads MRAPGCGRLVLPLLLLAAAALA. Serine 72 carries the post-translational modification Phosphoserine; by FAM20C. 5 disulfides stabilise this stretch: cysteine 90–cysteine 101, cysteine 95–cysteine 111, cysteine 136–cysteine 166, cysteine 139–cysteine 159, and cysteine 148–cysteine 180. Positions 130 to 182 constitute a Kazal-like domain; it reads GNKDSICKPCHMAQLASVCGSDGHTYSSVCKLEQQACLSSKQLAVRCEGPCPC. A glycan (N-linked (GlcNAc...) asparagine) is linked at asparagine 225. One can recognise a Thyroglobulin type-1 domain in the interval 310 to 376; it reads KPPCLAELER…GTRTHGSPDC (67 aa). Disulfide bonds link cysteine 313/cysteine 337, cysteine 348/cysteine 355, and cysteine 357/cysteine 376. O-linked (Xyl...) (glycosaminoglycan) serine glycans are attached at residues serine 383 and serine 388. Positions 387 to 424 are disordered; the sequence is GSGVGWEDEEEKETEEAGEEAEEEEGEAGEADDGGYIW. Over residues 392–424 the composition is skewed to acidic residues; sequence WEDEEEKETEEAGEEAEEEEGEAGEADDGGYIW.

Contains chondroitin sulfate and heparan sulfate O-linked oligosaccharides. As to expression, highly expressed in brain. Also found in lung and testis.

The protein resides in the secreted. It localises to the extracellular space. Its subcellular location is the extracellular matrix. In terms of biological role, may participate in diverse steps of neurogenesis. Binds calcium. The polypeptide is Testican-2 (SPOCK2) (Homo sapiens (Human)).